The following is a 1441-amino-acid chain: Probable cleavage and polyadenylation specificity factor subunit 1 (1441 aa).

The protein belongs to the CPSF1 family. In terms of assembly, CPSF is a heterotetramer composed of four distinct subunits 160, 100, 70 and 30 kDa.

It localises to the nucleus. In terms of biological role, CPSF plays a key role in pre-mRNA 3'-end formation, recognizing the AAUAAA signal sequence and interacting with poly(A)polymerase and other factors to bring about cleavage and poly(A) addition. This subunit is involved in the RNA recognition step of the polyadenylation reaction. This chain is Probable cleavage and polyadenylation specificity factor subunit 1, found in Oryza sativa subsp. japonica (Rice).